The following is a 445-amino-acid chain: MTSRIELARVDLRGRTPSTAELRAALPRGGVDVDSVLHHVRPVVEAVRERGAAAALEFGEKFDGVVPATVRVPAAELARALDELDPAVRAALEESIARARRVHADQRRTDTTTEVVPGGTVTERWVPVARVGLYVPGGNAVYPSSVVMNVVPAQTAGVGSLVVASPPQANFGGLPHPTILAAAALLGVEEVWAVGGAQAVALLSYGGTDTDGAPLDPVDLITGPGNIYVTAAKRLCRGLVGIDAEAGPTEIAILADATADPAHVAADLISQAEHDVLAASVLVTDSVALADAVDAALTAQLAVVKHAERVRTALTGKQSGTVLVDDITQGLRVVDAYAAEHLEIQTADASAVAARVRSAGAVFVGPYAPVSLGDYCAGSNHVLPTAGCARHSSGLSVQTFLRGIHVVEYTEAALKDVAGHVVALADAEDLPAHGQAVTVRFEALS.

NAD(+)-binding residues include tyrosine 134, glutamine 198, and asparagine 226. 3 residues coordinate substrate: threonine 249, glutamine 271, and histidine 274. 2 residues coordinate Zn(2+): glutamine 271 and histidine 274. Active-site proton acceptor residues include glutamate 340 and histidine 341. The substrate site is built by histidine 341, aspartate 374, glutamate 428, and histidine 433. Residue aspartate 374 participates in Zn(2+) binding. Histidine 433 contributes to the Zn(2+) binding site.

This sequence belongs to the histidinol dehydrogenase family. Zn(2+) is required as a cofactor.

The catalysed reaction is L-histidinol + 2 NAD(+) + H2O = L-histidine + 2 NADH + 3 H(+). The protein operates within amino-acid biosynthesis; L-histidine biosynthesis; L-histidine from 5-phospho-alpha-D-ribose 1-diphosphate: step 9/9. Catalyzes the sequential NAD-dependent oxidations of L-histidinol to L-histidinaldehyde and then to L-histidine. The chain is Histidinol dehydrogenase from Nocardia farcinica (strain IFM 10152).